The chain runs to 535 residues: Ribonuclease Y (535 aa).

The helical transmembrane segment at 4–24 (IILLIVSALIGLILGYALISI) threads the bilayer. Positions 118 to 141 (ENLSSKEKVLDSKEQSLTDKSKHI) are disordered. In terms of domain architecture, KH spans 225–285 (TITSVHLPDD…IRREIARMTL (61 aa)). In terms of domain architecture, HD spans 351-444 (VLRHSVEVGK…VAAADALSSA (94 aa)).

This sequence belongs to the RNase Y family.

Its subcellular location is the cell membrane. Endoribonuclease that initiates mRNA decay. This chain is Ribonuclease Y, found in Streptococcus pyogenes serotype M18 (strain MGAS8232).